The following is a 441-amino-acid chain: Rho-associated protein kinase 1 (441 aa).

Residues Asn-1 to Lys-99 adopt a coiled-coil conformation. The segment at Glu-114 to Ser-353 is SHROOM3 binding. One can recognise a RhoBD domain in the interval Thr-356–Phe-422. Residues Asn-418–Lys-441 adopt a coiled-coil conformation.

It belongs to the protein kinase superfamily. AGC Ser/Thr protein kinase family. In terms of assembly, homodimer. Interacts with RHOA (activated by GTP), RHOB, RHOC, GEM, MYLC2B, RHOE, PPP1R12A, LIMK1, LIMK2, TSG101, CHORDC1, DAPK3, PFN1, PTEN and JIP3. Interacts with FHOD1 in a Src-dependent manner. Interacts with ITGB1BP1 (via N-terminus and PTB domain). Interacts with SHROOM3. Requires Mg(2+) as cofactor.

The protein localises to the cytoplasm. It is found in the golgi apparatus membrane. Its subcellular location is the cytoskeleton. It localises to the microtubule organizing center. The protein resides in the centrosome. The protein localises to the centriole. It is found in the cell projection. Its subcellular location is the bleb. It localises to the cell membrane. The protein resides in the lamellipodium. The protein localises to the ruffle. The enzyme catalyses L-seryl-[protein] + ATP = O-phospho-L-seryl-[protein] + ADP + H(+). It carries out the reaction L-threonyl-[protein] + ATP = O-phospho-L-threonyl-[protein] + ADP + H(+). Activated by RHOA binding. Inhibited by Y-27632. Functionally, protein kinase which is a key regulator of the actin cytoskeleton and cell polarity. Involved in regulation of smooth muscle contraction, actin cytoskeleton organization, stress fiber and focal adhesion formation, neurite retraction, cell adhesion and motility via phosphorylation of DAPK3, GFAP, LIMK1, LIMK2, MYL9/MLC2, TPPP, PFN1 and PPP1R12A. Phosphorylates FHOD1 and acts synergistically with it to promote SRC-dependent non-apoptotic plasma membrane blebbing. Phosphorylates JIP3 and regulates the recruitment of JNK to JIP3 upon UVB-induced stress. Acts as a suppressor of inflammatory cell migration by regulating PTEN phosphorylation and stability. Acts as a negative regulator of VEGF-induced angiogenic endothelial cell activation. Required for centrosome positioning and centrosome-dependent exit from mitosis. Plays a role in terminal erythroid differentiation. Inhibits podocyte motility via regulation of actin cytoskeletal dynamics and phosphorylation of CFL1. Promotes keratinocyte terminal differentiation. Involved in osteoblast compaction through the fibronectin fibrillogenesis cell-mediated matrix assembly process, essential for osteoblast mineralization. May regulate closure of the eyelids and ventral body wall by inducing the assembly of actomyosin bundles. In Bos taurus (Bovine), this protein is Rho-associated protein kinase 1 (ROCK1).